Consider the following 367-residue polypeptide: RYamide receptor (367 aa).

Residues 1-35 (MDANTTRNESFSLDCELVNPNSTLANVYFLSAVYS) lie on the Extracellular side of the membrane. Asn4, Asn8, and Asn21 each carry an N-linked (GlcNAc...) asparagine glycan. The helical transmembrane segment at 36–56 (MYAIIFVVALIGNSFVCYIVL) threads the bilayer. Residues 57–66 (SSPPMRTVTN) lie on the Cytoplasmic side of the membrane. Residues 67-87 (FFILNLAIGDVLITLLCVPFT) form a helical membrane-spanning segment. Topologically, residues 88–113 (SVSLLMQYWPFGGILCPVVNYSQALS) are extracellular. Asn107 carries an N-linked (GlcNAc...) asparagine glycan. A helical transmembrane segment spans residues 114-134 (VFVSAYTLVAISIDKYMIIMW). The Cytoplasmic portion of the chain corresponds to 135 to 143 (PLKPRISKR). A helical transmembrane segment spans residues 144–164 (FATYIIALVWLIAGITVLPSA). Topologically, residues 165–212 (TFTTLINDENILGTSAYEQCDKYICAEEYSKVGQEYGDLYTKVLMFLQ) are extracellular. Residues 213–233 (YVIPSLVLLFTYTSIGVVIWC) form a helical membrane-spanning segment. Topologically, residues 234–258 (HRIPGEAENSRDQRIAKNKTKMIKM) are cytoplasmic. The helical transmembrane segment at 259 to 279 (MVTVVCVYTICWLPYNVLMIF) threads the bilayer. The Extracellular portion of the chain corresponds to 280 to 282 (KEH). A helical transmembrane segment spans residues 283 to 303 (ISGSVMVYLYFPLHGLAMSHA). Residues 304–367 (CYNPIIYCYM…EITRAQPTSA (64 aa)) are Cytoplasmic-facing.

It belongs to the G-protein coupled receptor 1 family.

The protein localises to the cell membrane. Functionally, receptor for the neuropeptides RYamide-1 and RYamide-2. The activity of this receptor is mediated by G proteins which activate a phosphatidyl-inositol-calcium second messenger system. RYamide-2 is the most potent activator. This Tribolium castaneum (Red flour beetle) protein is RYamide receptor.